The primary structure comprises 619 residues: Guanylate cyclase soluble subunit beta-1 (619 aa).

Residue His105 coordinates heme. The 134-residue stretch at 421-554 folds into the Guanylate cyclase domain; sequence TILFSGIVGF…NTVNLTSRTE (134 aa).

The protein belongs to the adenylyl cyclase class-4/guanylyl cyclase family. As to quaternary structure, the active enzyme is formed by a heterodimer of an alpha and a beta subunit. Homotetramer; dimer of dimers (in vitro). Heterodimer with GUCY1A1. Can also form inactive homodimers in vitro. The cofactor is heme. In terms of tissue distribution, lung and brain.

It is found in the cytoplasm. It carries out the reaction GTP = 3',5'-cyclic GMP + diphosphate. With respect to regulation, activated by nitric oxide in the presence of magnesium or manganese ions. Mediates responses to nitric oxide (NO) by catalyzing the biosynthesis of the signaling molecule cGMP. This chain is Guanylate cyclase soluble subunit beta-1 (Gucy1b1), found in Rattus norvegicus (Rat).